Here is a 1736-residue protein sequence, read N- to C-terminus: Collagen alpha-2(XI) chain (1736 aa).

Residues 1-27 form the signal peptide; it reads MERCSRCHHLLLLVLLLLWLSAAPAWA. In terms of domain architecture, Laminin G-like spans 57–228; the sequence is DVAYRVSRPA…ESCDQKELEC (172 aa). The nonhelical region stretch occupies residues 215-486; the sequence is QAAYESCDQK…ILQQARVALR (272 aa). 2 disordered regions span residues 229–465 and 485–1539; these read EGGW…DKGP and LRGP…SPGG. A compositionally biased stretch (polar residues) spans 258–270; the sequence is PQNQEPQAQSTES. Residues 363 to 376 are compositionally biased toward low complexity; sequence ALSAETARSEAAAR. Collagen-like domains follow at residues 399 to 447, 487 to 545, and 546 to 587; these read GPPG…GPPG, GPPG…ADGA, and RGMP…PPGE. Residues 400–413 show a composition bias toward pro residues; it reads PPGPEGPAGFPGPP. Positions 487-1500 are triple-helical region; sequence GPPGPMGYTG…PGHPGPPGEV (1014 aa). The segment covering 515–533 has biased composition (low complexity); that stretch reads DLGPQGPRGPQGLMGPPGK. The segment covering 615–624 has biased composition (pro residues); that stretch reads KGPPGIPGPP. Residues 650 to 663 are compositionally biased toward low complexity; the sequence is QQGTPGTQGLPGPQ. Positions 765–774 are enriched in basic and acidic residues; it reads RGEDGPEGPK. The span at 842 to 861 shows a compositional bias: low complexity; it reads PTGPRGQRGPRGATGKSGAK. Over residues 994 to 1003 the composition is skewed to gly residues; it reads GTAGGPGLKG. Residues 1029–1040 show a composition bias toward pro residues; sequence IGPPGRPGPQGP. Collagen-like domains are found at residues 1072 to 1127 and 1128 to 1172; these read GPAG…ADGE and PGAR…ETGD. A compositionally biased stretch (low complexity) spans 1115–1133; the sequence is PVGQPGAAGADGEPGARGP. A compositionally biased stretch (pro residues) spans 1176–1187; it reads MGPPGPPGPRGP. Positions 1217–1230 are enriched in low complexity; sequence ESGSPGVQGEPGVK. Basic and acidic residues-rich tracts occupy residues 1232–1241 and 1287–1296; these read PRGERGEKGE and DGAKGDRGED. Low complexity-rich tracts occupy residues 1341-1364 and 1376-1386; these read PGAV…KPGP and QQGRPGATGQA. Over residues 1388-1397 the composition is skewed to pro residues; it reads PPGPVGPPGL. Low complexity predominate over residues 1413 to 1422; it reads PGLIGLIGPP. The Collagen-like 6 domain occupies 1444–1499; that stretch reads GETGIPGASGPIGPGGPPGLPGPAGPKGAKGATGPAGPKGEKGVQGPPGHPGPPGE. Residues 1457-1467 show a composition bias toward pro residues; it reads PGGPPGLPGPA. The segment covering 1469-1481 has biased composition (low complexity); it reads PKGAKGATGPAGP. A propeptide spans 1501–1736 (C-terminal propeptide); the sequence is IQPLPIQMPK…VLLGPVCFMG (236 aa). The Fibrillar collagen NC1 domain maps to 1541 to 1735; the sequence is EEIFGSLDSL…GVLLGPVCFM (195 aa). An intrachain disulfide couples cysteine 1571 to cysteine 1603. 5 residues coordinate Ca(2+): aspartate 1589, asparagine 1591, glutamine 1592, cysteine 1594, and aspartate 1597. 2 N-linked (GlcNAc...) asparagine glycosylation sites follow: asparagine 1604 and asparagine 1650. Cystine bridges form between cysteine 1612–cysteine 1733 and cysteine 1655–cysteine 1689.

It belongs to the fibrillar collagen family. As to quaternary structure, trimers composed of three different chains: alpha 1(XI), alpha 2(XI), and alpha 3(XI). Alpha 3(XI) is a post-translational modification of alpha 1(II). Alpha 1(V) can also be found instead of alpha 3(XI)=1(II). In terms of processing, prolines at the third position of the tripeptide repeating unit (G-X-Y) are hydroxylated in some or all of the chains.

It localises to the secreted. It is found in the extracellular space. The protein resides in the extracellular matrix. Its function is as follows. May play an important role in fibrillogenesis by controlling lateral growth of collagen II fibrils. The polypeptide is Collagen alpha-2(XI) chain (COL11A2) (Bos taurus (Bovine)).